Here is a 479-residue protein sequence, read N- to C-terminus: Aspartyl/glutamyl-tRNA(Asn/Gln) amidotransferase subunit B (479 aa).

This sequence belongs to the GatB/GatE family. GatB subfamily. In terms of assembly, heterotrimer of A, B and C subunits.

The catalysed reaction is L-glutamyl-tRNA(Gln) + L-glutamine + ATP + H2O = L-glutaminyl-tRNA(Gln) + L-glutamate + ADP + phosphate + H(+). It carries out the reaction L-aspartyl-tRNA(Asn) + L-glutamine + ATP + H2O = L-asparaginyl-tRNA(Asn) + L-glutamate + ADP + phosphate + 2 H(+). Allows the formation of correctly charged Asn-tRNA(Asn) or Gln-tRNA(Gln) through the transamidation of misacylated Asp-tRNA(Asn) or Glu-tRNA(Gln) in organisms which lack either or both of asparaginyl-tRNA or glutaminyl-tRNA synthetases. The reaction takes place in the presence of glutamine and ATP through an activated phospho-Asp-tRNA(Asn) or phospho-Glu-tRNA(Gln). The polypeptide is Aspartyl/glutamyl-tRNA(Asn/Gln) amidotransferase subunit B (Streptococcus pyogenes serotype M12 (strain MGAS2096)).